Consider the following 380-residue polypeptide: tRNA-specific 2-thiouridylase MnmA (380 aa).

ATP contacts are provided by residues 12-19 (GLSGGVDS) and M38. Residues 108–110 (NPD) form an interaction with target base in tRNA region. Catalysis depends on C113, which acts as the Nucleophile. C113 and C210 are disulfide-bonded. An ATP-binding site is contributed by G138. Residues 160-162 (KDQ) are interaction with tRNA. C210 serves as the catalytic Cysteine persulfide intermediate.

Belongs to the MnmA/TRMU family.

The protein resides in the cytoplasm. It carries out the reaction S-sulfanyl-L-cysteinyl-[protein] + uridine(34) in tRNA + AH2 + ATP = 2-thiouridine(34) in tRNA + L-cysteinyl-[protein] + A + AMP + diphosphate + H(+). Its function is as follows. Catalyzes the 2-thiolation of uridine at the wobble position (U34) of tRNA, leading to the formation of s(2)U34. In Ureaplasma urealyticum serovar 10 (strain ATCC 33699 / Western), this protein is tRNA-specific 2-thiouridylase MnmA.